We begin with the raw amino-acid sequence, 406 residues long: DNA-binding transcriptional repressor Mlc (406 aa).

A DNA-binding region (H-T-H motif) is located at residues 33–42 (RIDLSRLAQL). The Zn(2+) site is built by His247, Cys257, Cys259, and Cys264.

It belongs to the ROK (NagC/XylR) family. Homodimer. Homotetramer. There is probably an equilibrium between the dimeric and the tetrameric form. Interacts with dephosphorylated PtsG. Mlc and PtsG EIIB domain form a complex with the 1:1 stoichiometry. Interacts with MtfA.

The protein localises to the cytoplasm. Its activity is regulated as follows. Activity is modulated by glucose. In the presence of glucose, is inhibited by interaction with the dephosphorylated form of PtsG, which sequesters Mlc in the inner membrane and prevents Mlc binding to its target promoters. The restriction of conformational freedom resulting from the anchoring of four ends of Mlc to the membrane could be the primary cause of its loss of DNA-binding activity in vivo. Activity is also inhibited by interaction with the Mlc titration factor A (mtfA). The inactivation mechanisms of Mlc by dephosphorylated PtsG and MtfA differ significantly. Global regulator of carbohydrate metabolism. Represses the expression of several genes involved in sugar transport and utilization, in particular phosphoenolpyruvate-carbohydrate phosphotransferase system (PTS) genes. Represses expression of ptsG (EIICB(Glc)), which encodes the PTS system glucose-specific EIICB component. Also represses the expression of the manXYZ operon, encoding the mannose-specific PTS system, expression of malT, encoding the transcriptional activator of the maltose regulon, and expression of the pts operon, composed of the genes ptsH, ptsI and crr. Represses its own expression. Acts by binding to the regulatory region of the target genes. The polypeptide is DNA-binding transcriptional repressor Mlc (Escherichia coli (strain K12)).